Reading from the N-terminus, the 131-residue chain is Holo-[acyl-carrier-protein] synthase (131 aa).

Mg(2+)-binding residues include D8 and E57.

It belongs to the P-Pant transferase superfamily. AcpS family. Requires Mg(2+) as cofactor.

It localises to the cytoplasm. The enzyme catalyses apo-[ACP] + CoA = holo-[ACP] + adenosine 3',5'-bisphosphate + H(+). Its function is as follows. Transfers the 4'-phosphopantetheine moiety from coenzyme A to a Ser of acyl-carrier-protein. The chain is Holo-[acyl-carrier-protein] synthase from Desulforudis audaxviator (strain MP104C).